The following is a 1033-amino-acid chain: MRDLKEYDYSALLLNLTTSSLNKAQRRWRFAYAAIYSMRAMLSLVKEIVPARIDPKTSDASLSLSYTALESGEGAKINSMPLSYVPAIDQEQLVEIMKGKDLPGIQALGGVEGVAASLRTNPTKGIHGNEQEVSRRRDLFGSNTYHKPPPKGLLFFVYEAFKDLTILILLVCAIFSLGFGIKEHGIKEGWYEGGSIFVAVFLVIVVSALSNFRQERQFDKLSKISNNIKVEVLRDSRRQHISIFDVVVGDVVFLKIGDQIPADGLFLEGHSLQVDESSMTGESDHLEVDHKDNPFLFSGTKIVDGFAQMLVVSVGMSTTWGQTMSSINQDSSERTPLQVRLDTLTSTIGKIGLTVAALVLVVLLVRYFTGNTEKEGKREYNGSKTPVDTVVNSVVRIVAAAVTIVVVAIPEGLPLAVTLTLAYSMKRMMSDQAMVRKLSACETMGSATVICTDKTGTLTLNEMKVTKFWLGQESIHEDSTKMISPDVLDLLYQGTGLNTTGSVCVSDSGSTPEFSGSPTEKALLSWTVLNLGMDMESVKQKHEVLRVETFSSAKKRSGVLVRRKSDNTVHVHWKGAAEMVLAMCSHYYTSTGSVDLMDSTAKSRIQAIIQGMAASSLRCIAFAHKIASNDSVLEEDGLTLMGIVGLKDPCRPGVSKAVETCKLAGVTIKMITGDNVFTAKAIAFECGILDHNDKDEEDAVVEGVQFRNYTDEERMQKVDKIRVMARSSPSDKLLMVKCLRLKGHVVAVTGDGTNDAPALKEADIGLSMGIQGTEVAKESSDIVILDDNFASVATVLKWGRCVYNNIQKFIQFQLTVNVAALVINFIAAISAGEVPLTAVQLLWVNLIMDTLGALALATERPTNELLKRKPVGRTEALITNVMWRNLLVQSLYQIAVLLILQFKGMSIFSVRKEVKDTLIFNTFVLCQVFNEFNAREMEKKNVFKGLHRNRLFIGIIAITIVLQVIMVEFLKKFADTVRLNGWQWGTCIALASLSWPIGFFTKFIPVSETPFLSYFKNPRSLFKGSRSPSLKKP.

At M1 the chain carries N-acetylmethionine. The Cytoplasmic portion of the chain corresponds to 1–152; it reads MRDLKEYDYS…NTYHKPPPKG (152 aa). The interval 25–36 is interaction with calmodulin; it reads QRRWRFAYAAIY. At S37 the chain carries Phosphoserine. The chain crosses the membrane as a helical span at residues 153–173; the sequence is LLFFVYEAFKDLTILILLVCA. The Lumenal segment spans residues 174–191; that stretch reads IFSLGFGIKEHGIKEGWY. Residues 192 to 212 form a helical membrane-spanning segment; that stretch reads EGGSIFVAVFLVIVVSALSNF. Over 213-341 the chain is Cytoplasmic; sequence RQERQFDKLS…SERTPLQVRL (129 aa). The chain crosses the membrane as a helical span at residues 342 to 361; the sequence is DTLTSTIGKIGLTVAALVLV. Residues 362 to 397 are Lumenal-facing; sequence VLLVRYFTGNTEKEGKREYNGSKTPVDTVVNSVVRI. A helical transmembrane segment spans residues 398 to 415; that stretch reads VAAAVTIVVVAIPEGLPL. The Cytoplasmic portion of the chain corresponds to 416–806; the sequence is AVTLTLAYSM…KWGRCVYNNI (391 aa). Residue D453 is the 4-aspartylphosphate intermediate of the active site. 2 residues coordinate Mg(2+): D751 and D755. Residues 807 to 825 form a helical membrane-spanning segment; sequence QKFIQFQLTVNVAALVINF. At 826–836 the chain is on the lumenal side; sequence IAAISAGEVPL. Residues 837–857 form a helical membrane-spanning segment; the sequence is TAVQLLWVNLIMDTLGALALA. Topologically, residues 858-877 are cytoplasmic; that stretch reads TERPTNELLKRKPVGRTEAL. The chain crosses the membrane as a helical span at residues 878-900; it reads ITNVMWRNLLVQSLYQIAVLLIL. Residues 901-909 are Lumenal-facing; that stretch reads QFKGMSIFS. Residues 910-930 traverse the membrane as a helical segment; it reads VRKEVKDTLIFNTFVLCQVFN. Topologically, residues 931-948 are cytoplasmic; that stretch reads EFNAREMEKKNVFKGLHR. The helical transmembrane segment at 949-970 threads the bilayer; sequence NRLFIGIIAITIVLQVIMVEFL. The Lumenal portion of the chain corresponds to 971 to 980; it reads KKFADTVRLN. The chain crosses the membrane as a helical span at residues 981–1002; that stretch reads GWQWGTCIALASLSWPIGFFTK. Over 1003-1006 the chain is Cytoplasmic; sequence FIPV.

It belongs to the cation transport ATPase (P-type) (TC 3.A.3) family. Type IIB subfamily.

The protein resides in the membrane. The enzyme catalyses Ca(2+)(in) + ATP + H2O = Ca(2+)(out) + ADP + phosphate + H(+). Activated by calmodulin. This magnesium-dependent enzyme catalyzes the hydrolysis of ATP coupled with the translocation of calcium from the cytosol out of the cell or into organelles. This Arabidopsis thaliana (Mouse-ear cress) protein is Calcium-transporting ATPase 12, plasma membrane-type (ACA12).